The primary structure comprises 402 residues: Calcium-responsive transactivator (402 aa).

The N-terminal auto-inhibitory domain; necessary for interaction with SMARCA4/BRG1 stretch occupies residues 1 to 148 (MSVAFASARP…TLPTTSMSLS (148 aa)). The SH2-binding motif lies at 50-53 (YQQI). 2 disordered regions span residues 72-171 (QSLL…VPMQ) and 221-402 (AMMG…NYQQ). A compositionally biased stretch (low complexity) spans 85–106 (LGPGALSQSGSSQGLHPQGSLS). Composition is skewed to polar residues over residues 128-149 (NHVS…SLSG) and 161-171 (SGPTSQSVPMQ). The segment at 149-238 (GSGHGTGPGY…GGSMMGQRPM (90 aa)) is methionine-rich intra-molecular domain. Residues 233-251 (MGQRPMAPYRPSQQGSSQQ) show a composition bias toward low complexity. The tract at residues 252–323 (YLGQEEYYSE…SQYSQQQAGY (72 aa)) is MFD domain. Over residues 261–277 (EQYSHSQGSAEPMSQQY) the composition is skewed to polar residues. Residues 296–305 (SYDRSFEDPT) show a composition bias toward basic and acidic residues. Residues 311-375 (GGNSQYSQQQ…QGQGQQYGSY (65 aa)) show a composition bias toward low complexity. The tract at residues 340 to 402 (NQQSYPGQQQ…EQGQYGNYQQ (63 aa)) is necessary for nuclear localization. Positions 359–362 (SQYS) match the SH2-binding motif. The segment covering 376 to 388 (RTSQTGPSAQQQR) has biased composition (polar residues). Residues 377–385 (TSQTGPSAQ) carry the SH3-binding motif. The span at 390–402 (YGYEQGQYGNYQQ) shows a compositional bias: low complexity. The segment at 393-402 (EQGQYGNYQQ) is necessary for interaction with CREBBP and for the recruitment of CREBBP to the nuclear bodies. The SH2-binding signature appears at 397–400 (YGNY).

The protein belongs to the SS18 family. Homodimer. Dimerization may be necessary for its function in neuronal dendritic development. Interacts (via C-terminus) with CREBBP (via N-terminus), EP300 and SMARCA4/BRG1. Interacts with the nBAF complex. Association with CREBBP facilitates transcription while the association with SMARCA4/BRG1 suppresses CREST-mediated transcription in resting neurons.

Its subcellular location is the nucleus. It is found in the chromosome. The protein resides in the centromere. The protein localises to the kinetochore. In terms of biological role, transcriptional activator which is required for calcium-dependent dendritic growth and branching in cortical neurons. Recruits CREB-binding protein (CREBBP) to nuclear bodies. Component of the CREST-BRG1 complex, a multiprotein complex that regulates promoter activation by orchestrating a calcium-dependent release of a repressor complex and a recruitment of an activator complex. In resting neurons, transcription of the c-FOS promoter is inhibited by BRG1-dependent recruitment of a phospho-RB1-HDAC1 repressor complex. Upon calcium influx, RB1 is dephosphorylated by calcineurin, which leads to release of the repressor complex. At the same time, there is increased recruitment of CREBBP to the promoter by a CREST-dependent mechanism, which leads to transcriptional activation. The CREST-BRG1 complex also binds to the NR2B promoter, and activity-dependent induction of NR2B expression involves a release of HDAC1 and recruitment of CREBBP. In Mus musculus (Mouse), this protein is Calcium-responsive transactivator (Ss18l1).